Consider the following 1792-residue polypeptide: E3 ubiquitin-protein ligase RBBP6 (1792 aa).

The 73-residue stretch at 4-76 (VHYKFSSKLN…NSSVIVRRIP (73 aa)) folds into the DWNN domain. An N6-acetyllysine modification is found at Lys130. Residues 159–176 (YTCFRCGKPGHYIKNCPT) form a CCHC-type zinc finger. Phosphoserine occurs at positions 244, 245, 246, and 247. An RING-type; degenerate zinc finger spans residues 259–300 (CLICKDIMTDAVVIPCCGNSYCDECIRTALLESDEHTCPTCH). A disordered region spans residues 326 to 347 (TGYTKRLRKQLPPPPPPIPPPR). Pro residues predominate over residues 336–347 (LPPPPPPIPPPR). Phosphoserine is present on Ser360. A disordered region spans residues 371–410 (IPVTSSSTHPAPSISSLTSNQSSLAPPVSGNPSSAPAPVP). Over residues 374-393 (TSSSTHPAPSISSLTSNQSS) the composition is skewed to low complexity. Position 516 is a phosphoserine (Ser516). Disordered stretches follow at residues 532–601 (INRG…SVPP), 621–640 (QTAH…SREE), and 645–799 (QRRL…FNRY). Positions 549–571 (SLPATPVFVPVPPPPLYPPPPHT) are (Microbial infection) Interaction with Ebolavirus VP30. Over residues 557–601 (VPVPPPPLYPPPPHTLPLPPGVPPPQFSPQFPPGQPPPAGYSVPP) the composition is skewed to pro residues. The short motif at 560–565 (PPPPLY) is the PPxPxY element. A compositionally biased stretch (polar residues) spans 621–634 (QTAHSNTIPTTQAP). Over residues 645 to 675 (QRRLKEEEKKKSKLDEFTNDFAKELMEYKKI) the composition is skewed to basic and acidic residues. Positions 685–719 (RSKSPYSGSSYSRSSYTYSKSRSGSTRSRSYSRSF) are enriched in low complexity. The segment covering 735–770 (RRGRGKSRNYRSRSRSHGYHRSRSRSPPYRRYHSRS) has biased composition (basic residues). Ser768, Ser770, Ser772, and Ser780 each carry phosphoserine. Residues 790-799 (ETEREYFNRY) show a composition bias toward basic and acidic residues. Phosphoserine is present on residues Ser815, Ser861, and Ser873. 4 disordered regions span residues 847–1290 (AGAQ…DTKR), 1321–1348 (WDKD…PASV), 1360–1665 (VKYP…SKDL), and 1682–1792 (VVQV…SVTV). The segment covering 902–922 (LSARDGHNQKDNTKSKEKESE) has biased composition (basic and acidic residues). Positions 931–940 (NKHKKHRKRR) are enriched in basic residues. 5 stretches are compositionally biased toward basic and acidic residues: residues 955-971 (ETSR…ENKT), 979-990 (SRDDATPVRDEP), 1001-1017 (VSEK…AKGD), 1041-1071 (PQEK…KTDN), and 1095-1161 (SAKE…KDFE). Residue Ser957 is modified to Phosphoserine. The interval 982-1139 (DATPVRDEPM…AKKPNEKNKP (158 aa)) is interaction with RB1. Thr984 bears the Phosphothreonine mark. Glycyl lysine isopeptide (Lys-Gly) (interchain with G-Cter in SUMO2) cross-links involve residues Lys1106 and Lys1169. Ser1179 carries the post-translational modification Phosphoserine. The segment covering 1182–1200 (RKMEPDTEKMDRTPEKDKI) has biased composition (basic and acidic residues). Position 1221 is a phosphoserine (Ser1221). The span at 1230 to 1248 (EPSEKLESTSSKVKQEKVK) shows a compositional bias: basic and acidic residues. Residues 1258–1276 (TEGSSSTLVDYTSTSSTGG) show a composition bias toward polar residues. Position 1271 is a phosphothreonine (Thr1271). Residue Ser1277 is modified to Phosphoserine. Over residues 1280 to 1290 (RKSEEKTDTKR) the composition is skewed to basic and acidic residues. Phosphoserine is present on residues Ser1328, Ser1341, and Ser1347. Basic and acidic residues-rich tracts occupy residues 1362–1391 (YPEK…EVKS) and 1399–1435 (EKGK…DRLN). An interaction with p53 region spans residues 1433 to 1544 (RLNEQGNFKS…SPSRDRKPHD (112 aa)). Over residues 1436–1447 (EQGNFKSLSQSS) the composition is skewed to polar residues. 3 stretches are compositionally biased toward basic and acidic residues: residues 1448 to 1459 (KEARTSDKHDST), 1468 to 1506 (TPNR…RNKD), and 1514 to 1580 (KPRE…RNNK). Phosphothreonine is present on Thr1468. The segment covering 1618–1627 (LSHSSRLSSD) has biased composition (polar residues). A compositionally biased stretch (acidic residues) spans 1634–1646 (EAAFEPDYNESDS). Phosphoserine is present on residues Ser1646, Ser1648, and Ser1651. Residues 1692 to 1723 (SHSSPSVSPSRSHSPSGSQTRSHSSSASSAES) show a composition bias toward low complexity. Over residues 1727 to 1750 (KKKKKKKEKKKHKKHKKHKKHKKH) the composition is skewed to basic residues. Residues 1751-1760 (AGTEVELEKS) show a composition bias toward basic and acidic residues. Over residues 1761–1773 (QKHKHKKKKSKKN) the composition is skewed to basic residues. Residues 1774 to 1792 (KDKEKEKEKDDQKVKSVTV) show a composition bias toward basic and acidic residues.

In terms of assembly, interacts with p53/TP53 and RB1. Interacts also with MDM2 and YBX1. Interacts with NEK6. Interacts with ZBTB38. As to quaternary structure, (Microbial infection) [Isoform 1]: Interacts with ebolavirus VP30. In terms of processing, phosphorylated by NEK6. In terms of tissue distribution, highly expressed in the placenta and testis. Expressed at lower levels in the brain, heart, kidney, liver and lung. Overexpressed in esophageal cancer.

It is found in the nucleus. The protein localises to the nucleolus. It localises to the chromosome. The protein resides in the cytoplasm. Its subcellular location is the cytoskeleton. It is found in the microtubule organizing center. The protein localises to the centrosome. The enzyme catalyses S-ubiquitinyl-[E2 ubiquitin-conjugating enzyme]-L-cysteine + [acceptor protein]-L-lysine = [E2 ubiquitin-conjugating enzyme]-L-cysteine + N(6)-ubiquitinyl-[acceptor protein]-L-lysine.. Its pathway is protein modification; protein ubiquitination. E3 ubiquitin-protein ligase which promotes ubiquitination of YBX1, leading to its degradation by the proteasome. May play a role as a scaffold protein to promote the assembly of the p53/TP53-MDM2 complex, resulting in increase of MDM2-mediated ubiquitination and degradation of p53/TP53; may function as negative regulator of p53/TP53, leading to both apoptosis and cell growth. Regulates DNA-replication and the stability of chromosomal common fragile sites (CFSs) in a ZBTB38- and MCM10-dependent manner. Controls ZBTB38 protein stability and abundance via ubiquitination and proteasomal degradation, and ZBTB38 in turn negatively regulates the expression of MCM10 which plays an important role in DNA-replication. Its function is as follows. (Microbial infection) [Isoform 1]: Restricts ebolavirus replication probably by impairing the vp30-NP interaction, and thus viral transcription. In Homo sapiens (Human), this protein is E3 ubiquitin-protein ligase RBBP6 (RBBP6).